Reading from the N-terminus, the 835-residue chain is Peptide transporter family 1 (835 aa).

A run of 11 helical transmembrane segments spans residues 86 to 106 (IFFNGFTVLCYTTPLLGSIVA), 113 to 133 (FWTIFSVSILYAIGQVVLALA), 150 to 170 (GLLIIAFGTGGIKPCVSAFGG), 183 to 203 (LFFSMFYFSINAGSMISTFIS), 222 to 242 (FGIPAILMIVATLVFMGGSFW), 325 to 345 (MFLPVPMFWALYDQQGSVWLI), 368 to 388 (LNAVLILLFIPLFQVIIYPVA), 401 to 421 (VTGGLLASLAFLITGFVQLQV), 697 to 717 (ILWQIPQIVVITAAEILFSIT), 738 to 758 (WLLTTAAGDSIIVVITILNLF), and 765 to 785 (FFVYAAAMFVVIAIFALLSIF). The tract at residues 814-835 (PRYSIDNKGFHPDEKDTFDMHF) is disordered. Over residues 821–835 (KGFHPDEKDTFDMHF) the composition is skewed to basic and acidic residues.

The protein belongs to the major facilitator superfamily. Proton-dependent oligopeptide transporter (POT/PTR) (TC 2.A.17) family. In terms of tissue distribution, expressed specifically in the intestine.

It is found in the apical cell membrane. In terms of biological role, low-affinity peptide transporter that is necessary for proton-dependent uptake of di- or tripeptides, and to a minor extent tetrapeptides, in the intestine. Transport is independent of sodium and chloride ions. Controls the uptake of dietary fatty acids, plays a role in fatty acid synthesis and is responsible for dipeptide-induced acidification of the intestine. Regulates cellular pH differences together with the antiporter protein, nhx-2. Amino acid uptake and absorption levels influence the insulin signaling/daf-2 and let-363/TOR pathways, subsequently affecting the stress response and longevity of the organism. It is required for the uptake of the L-enantiomers of various amino acids, including L-glutamate. In response to the availability of amino acid nutrients, may play a role in promoting reproduction and fertility. This Caenorhabditis elegans protein is Peptide transporter family 1.